Reading from the N-terminus, the 291-residue chain is MRLLIITGISGAGKSLVVKYLEDIGFFCVDNLPPLLIGKFAEICLKSRGKISKVALVIDIRGGELFNDLVPELNALKESGIDYEILFLEASDQVLIKRYKESRRIHPLAPEGRLIKGIKTEREILSQIRKNATYIIDTSNLTPRQLKEEILAIFVEGRKFDGMIVNIISFGFKYGIPIECDLVFDVRFIPNPYYIESMKYKTGKDEEVRNYVMSFAETAEFMTKLKDLVDFLIPNYIKEGKSQLVIGVGCTGGRHRSVAISEALFSYLCGREHRVFIDHRDIDKDGRSNRR.

8-15 (GISGAGKS) is an ATP binding site. Residue 59–62 (DIRG) coordinates GTP.

The protein belongs to the RapZ-like family.

Functionally, displays ATPase and GTPase activities. The sequence is that of Nucleotide-binding protein Cthe_0113 from Acetivibrio thermocellus (strain ATCC 27405 / DSM 1237 / JCM 9322 / NBRC 103400 / NCIMB 10682 / NRRL B-4536 / VPI 7372) (Clostridium thermocellum).